The primary structure comprises 725 residues: MKVLTELQKQIFTIVKKENGKPIPPGIVVRMMENSPNFPGKHLIYRAIDDLLDWAILRKAGGVTNQLLVNYEPAEPLLDKKLQGILTLGNKNSGFIRSLDDDKTVYYVHYSNLTGALDGDLVEFCKLDKPQFGDKFDAAVITILKRARILYAGNFLVDQNEFALEYKIVADNPRFYLTMIVNPDSIPNNLASNTKIAFQIDEYDPDNNLCKVSVQQVLGNNDDPLINIKAIMLDNSIVFETNDVVEQHANKLSFDTEEQHKAYRQDLTDLAFVTVDPTTSKDLDDAIYVKTIPTGFVLYVAIADVAHYVNRNSEIDIEAKHKTSSIYLPGHYVVPMLPEQLSNQLCSLNPAQKRYVVVCEISFDNQGRIKTNKLYPATIISKNRFSYDQVNKWLNNKSELNCDETVINSLKAAFTLSDLIQAQRQKRGTIDLSHKETEIVVDEHYFPIKINFLVHDKAETMIENLMVVANETVAWVLTNNKIALPYRVHPRPSKKKLQSLIETVGELNITKPQFNLDTVTSSQIASWLNENKDNPSYEIFVILLLRTLGKAFYSVNPLMHFSIGSNHYTHFTSPIRRYIDLTIHRLLWMHLFTPDQFTDNERDQLKQELEKIADTVNDTEIKIINCERNANDYLTTLLLSKQIGKTFSGFISAITSFGIFMRMDENNFDGLIKITTIPDDFFIFEKEKMVLKGRKTNKVYKIGDRLEAKLSEIDFIQKRAILTLI.

One can recognise an RNB domain in the interval 264-592 (RQDLTDLAFV…IHRLLWMHLF (329 aa)). Residues 644–725 (GKTFSGFISA…IQKRAILTLI (82 aa)) enclose the S1 motif domain.

This sequence belongs to the RNR ribonuclease family. RNase R subfamily.

It localises to the cytoplasm. It carries out the reaction Exonucleolytic cleavage in the 3'- to 5'-direction to yield nucleoside 5'-phosphates.. Its function is as follows. 3'-5' exoribonuclease that releases 5'-nucleoside monophosphates and is involved in maturation of structured RNAs. The chain is Ribonuclease R from Mycoplasma genitalium (strain ATCC 33530 / DSM 19775 / NCTC 10195 / G37) (Mycoplasmoides genitalium).